A 355-amino-acid polypeptide reads, in one-letter code: 3-isopropylmalate dehydrogenase (355 aa).

Substrate is bound by residues Arg90, Arg100, Arg128, and Asp222. Residues Asp222, Asp246, and Asp250 each coordinate Mg(2+). Residue 280–292 (GSAPDIAGKGIAN) participates in NAD(+) binding.

This sequence belongs to the isocitrate and isopropylmalate dehydrogenases family. LeuB type 1 subfamily. Homodimer. It depends on Mg(2+) as a cofactor. The cofactor is Mn(2+).

Its subcellular location is the cytoplasm. The enzyme catalyses (2R,3S)-3-isopropylmalate + NAD(+) = 4-methyl-2-oxopentanoate + CO2 + NADH. It functions in the pathway amino-acid biosynthesis; L-leucine biosynthesis; L-leucine from 3-methyl-2-oxobutanoate: step 3/4. Its function is as follows. Catalyzes the oxidation of 3-carboxy-2-hydroxy-4-methylpentanoate (3-isopropylmalate) to 3-carboxy-4-methyl-2-oxopentanoate. The product decarboxylates to 4-methyl-2 oxopentanoate. This chain is 3-isopropylmalate dehydrogenase, found in Burkholderia lata (strain ATCC 17760 / DSM 23089 / LMG 22485 / NCIMB 9086 / R18194 / 383).